The sequence spans 899 residues: Translation initiation factor IF-2 (899 aa).

2 disordered regions span residues 65–84 and 91–310; these read KTRSTLNVPSTGGKSKSVQI and TYVK…SFNK. The span at 68-82 shows a compositional bias: polar residues; sequence STLNVPSTGGKSKSV. The segment covering 108-164 has biased composition (basic and acidic residues); that stretch reads QARREAEEQAQRAAEEQAKREAELREAAEKAKRAADEQAKREAAEKAKRDVAEKEKV. Residues 165-174 are compositionally biased toward polar residues; the sequence is TNQQNENMTK. Basic and acidic residues predominate over residues 177–236; sequence QAEKAKREAEAAELKRKAEEAARLKVEEEARRIAEEARRMAEENAGRWEAESAKPEESAD. Residues 262-276 show a composition bias toward basic residues; the sequence is SRSRAGKVTKQKKGN. Over residues 277–290 the composition is skewed to basic and acidic residues; it reads RQSESKADREEARA. Positions 398 to 567 constitute a tr-type G domain; sequence ARAPVVTIMG…LLQAEVLELK (170 aa). Residues 407–414 are G1; that stretch reads GHVDHGKT. A GTP-binding site is contributed by 407–414; the sequence is GHVDHGKT. Residues 432 to 436 are G2; it reads GITQH. A G3 region spans residues 453–456; the sequence is DTPG. GTP is bound by residues 453-457 and 507-510; these read DTPGH and NKID. The tract at residues 507 to 510 is G4; sequence NKID. The segment at 543 to 545 is G5; that stretch reads SAK.

The protein belongs to the TRAFAC class translation factor GTPase superfamily. Classic translation factor GTPase family. IF-2 subfamily.

Its subcellular location is the cytoplasm. Its function is as follows. One of the essential components for the initiation of protein synthesis. Protects formylmethionyl-tRNA from spontaneous hydrolysis and promotes its binding to the 30S ribosomal subunits. Also involved in the hydrolysis of GTP during the formation of the 70S ribosomal complex. This is Translation initiation factor IF-2 from Pectobacterium carotovorum subsp. carotovorum (strain PC1).